We begin with the raw amino-acid sequence, 114 residues long: MKVVAAYLLAKLSGNENPSVADLKKIVESVGAEIDQEKIDLFFSLIKDRDVTELIAVGREKMAALSSGGGAVAVASGGGGGAAPAAEPASVESKKKEEEKEESEDDGGMMSLFD.

A disordered region spans residues 74–114 (VASGGGGGAAPAAEPASVESKKKEEEKEESEDDGGMMSLFD). At Ser-103 the chain carries Phosphoserine.

Belongs to the eukaryotic ribosomal protein P1/P2 family. As to quaternary structure, P1 and P2 exist as dimers at the large ribosomal subunit. In terms of processing, phosphorylated.

Functionally, plays an important role in the elongation step of protein synthesis. This Arabidopsis thaliana (Mouse-ear cress) protein is Large ribosomal subunit protein P2v (RPP2E).